The following is a 371-amino-acid chain: Peptidyl-prolyl cis-trans isomerase D (371 aa).

One can recognise a PPIase cyclophilin-type domain in the interval 11–172 (FFDIQIGNEK…KDVTIVECGE (162 aa)). Residues 175-195 (GQDYDDADKQTPDATGDPYED) form a disordered region. TPR repeat units follow at residues 214–247 (ASEL…LHEF), 267–300 (FALH…ANAA), and 308–341 (AKAY…APGD).

The protein belongs to the cyclophilin-type PPIase family. PPIase D subfamily.

The protein resides in the cytoplasm. It carries out the reaction [protein]-peptidylproline (omega=180) = [protein]-peptidylproline (omega=0). Functionally, PPIases accelerate the folding of proteins. It catalyzes the cis-trans isomerization of proline imidic peptide bonds in oligopeptides. This chain is Peptidyl-prolyl cis-trans isomerase D (cpr6), found in Aspergillus oryzae (strain ATCC 42149 / RIB 40) (Yellow koji mold).